We begin with the raw amino-acid sequence, 141 residues long: Hemoglobin subunit alpha-A (141 aa).

A Globin domain is found at 1–141; that stretch reads VLNAGDKANV…VGTVLTSKYR (141 aa). An O2-binding site is contributed by His58. His87 provides a ligand contact to heme b.

Belongs to the globin family. In terms of assembly, heterotetramer of two alpha chains and two beta chains. In terms of tissue distribution, red blood cells.

Functionally, involved in oxygen transport from the lung to the various peripheral tissues. In Chrysemys picta bellii (Western painted turtle), this protein is Hemoglobin subunit alpha-A (HBAA).